A 629-amino-acid chain; its full sequence is uncharacterized protein (629 aa).

Disordered stretches follow at residues 101 to 126 (SWKKSSSHPKSKEVSNGLLKVSTPPT), 172 to 209 (PQKDNQGFSKSKHLSTYEGETENGFSTSTEEEEEEEED), 315 to 339 (STPKKSFGQTPRIKTELSESPNSQR), and 448 to 468 (GENTANNGYGPQTLNETSEEP). Residues 200-209 (TEEEEEEEED) are compositionally biased toward acidic residues. Residue Ser334 is modified to Phosphoserine. The segment covering 448 to 463 (GENTANNGYGPQTLNE) has biased composition (polar residues).

This is an uncharacterized protein from Schizosaccharomyces pombe (strain 972 / ATCC 24843) (Fission yeast).